The following is a 182-amino-acid chain: Flavin prenyltransferase UbiX (182 aa).

FMN contacts are provided by residues 9 to 11, Ser-35, 86 to 89, and Arg-121; these read GAS and SIKT. Residues Tyr-151 and Arg-167 each coordinate dimethylallyl phosphate.

Belongs to the UbiX/PAD1 family.

The enzyme catalyses dimethylallyl phosphate + FMNH2 = prenylated FMNH2 + phosphate. Its function is as follows. Flavin prenyltransferase that catalyzes the synthesis of the prenylated FMN cofactor (prenyl-FMN) for 4-hydroxy-3-polyprenylbenzoic acid decarboxylase UbiD. The prenyltransferase is metal-independent and links a dimethylallyl moiety from dimethylallyl monophosphate (DMAP) to the flavin N5 and C6 atoms of FMN. The sequence is that of Flavin prenyltransferase UbiX from Archaeoglobus fulgidus (strain ATCC 49558 / DSM 4304 / JCM 9628 / NBRC 100126 / VC-16).